Consider the following 271-residue polypeptide: Na(+), Li(+), K(+)/H(+) antiporter subunit B (271 aa).

A run of 7 helical transmembrane segments spans residues isoleucine 2 to phenylalanine 22, leucine 36 to glycine 56, tryptophan 94 to isoleucine 114, proline 130 to tryptophan 150, isoleucine 152 to glutamine 172, serine 193 to glycine 213, and alanine 216 to methionine 236. The disordered stretch occupies residues threonine 252–leucine 271.

This sequence belongs to the UmpA/UmpB family. As to quaternary structure, heterodimer composed of UmpA and UmpB.

It localises to the cell membrane. Part of a two-component antiporter that catalyzes the efflux of Na(+), Li(+) and K(+) in exchange for external protons. Shows a preference for Na(+), followed by K(+) and Li(+). This is Na(+), Li(+), K(+)/H(+) antiporter subunit B from Vreelandella zhaodongensis (Halomonas zhaodongensis).